Consider the following 594-residue polypeptide: Solute carrier family 22 member 14 (594 aa).

At 1-70 (MAGEENFKEE…EFGTFQQRLV (70 aa)) the chain is on the cytoplasmic side. Residues 71–91 (ALTFIPSIMSAFFMFADHFVF) form a helical membrane-spanning segment. At 92 to 184 (TAQKPYCNTS…LVCGMETKKD (93 aa)) the chain is on the extracellular side. N-linked (GlcNAc...) asparagine glycosylation is found at N99, N117, N125, and N150. Residues 185–205 (TAQIMFMAGLPIGSLIFRLIT) traverse the membrane as a helical segment. The Cytoplasmic portion of the chain corresponds to 206 to 210 (DKMGR). The chain crosses the membrane as a helical span at residues 211 to 231 (YPAILLSLLGLIIFGFGTAFM). Over 232 to 235 (NSFH) the chain is Extracellular. The chain crosses the membrane as a helical span at residues 236–256 (LYLFFRFGISQSVVGYAISSI). Residues 257–270 (SLATEWLVGEHRAH) are Cytoplasmic-facing. Residues 271-291 (AIILGHCFFAVGAVLLTGIAY) traverse the membrane as a helical segment. Residues 292–297 (SLPHWQ) lie on the Extracellular side of the membrane. The chain crosses the membrane as a helical span at residues 298–318 (LLFLVGGILVIPFISYIWILP). The Cytoplasmic portion of the chain corresponds to 319–379 (ESPRWLMMKG…DFCKNRQLCK (61 aa)). A helical membrane pass occupies residues 380–400 (VTLVMSCVWFTVSYTYFTLSL). Topologically, residues 401 to 408 (RMRELGVS) are extracellular. A helical transmembrane segment spans residues 409–431 (VHFRHVVPSIMEVPARLCCIFLL). Residues 432–437 (QQIGRK) lie on the Cytoplasmic side of the membrane. A helical membrane pass occupies residues 438–458 (WSLAVTLLQAIIWCLLLLFLP). The Extracellular segment spans residues 459–488 (EGEDGLRLKWPRCPATELKSMTILVLMLRE). The helical transmembrane segment at 489–509 (FSLAATVTVFFLYTAELLPTV) threads the bilayer. The Cytoplasmic segment spans residues 510 to 512 (LRA). The chain crosses the membrane as a helical span at residues 513–533 (TGLGLVSLASVAGAILSLTII). The Extracellular segment spans residues 534 to 538 (SQTPS). Residues 539-559 (LLPIFLCCVLAIVAFSLSSLL) traverse the membrane as a helical segment. The Cytoplasmic segment spans residues 560 to 594 (PETRDQPLSESLNHSSQIRNKVKDMKTKETSSDDV). The interval 566–594 (PLSESLNHSSQIRNKVKDMKTKETSSDDV) is disordered. Positions 567–578 (LSESLNHSSQIR) are enriched in polar residues. Basic and acidic residues predominate over residues 580-594 (KVKDMKTKETSSDDV).

This sequence belongs to the major facilitator (TC 2.A.1) superfamily. Organic cation transporter (TC 2.A.1.19) family. In terms of tissue distribution, ubiquitous.

It is found in the mitochondrion inner membrane. The protein resides in the cell projection. It localises to the cilium. The protein localises to the flagellum membrane. It catalyses the reaction riboflavin(in) = riboflavin(out). In terms of biological role, riboflavin transporter localized at the inner mitochondrial membrane of the spermatozoa midpiece, which is required for male fertility. SLC22A14-mediated riboflavin transport is essential for spermatozoa energy generation and motility: riboflavin is the precursor of FMN and FAD, which are coenzymes of many enzymes in the TCA cycle (the citric acid cycle) in mitochondria. Required for sperm motility and normal sperm flagellar structure. This chain is Solute carrier family 22 member 14, found in Homo sapiens (Human).